Reading from the N-terminus, the 246-residue chain is Major prion protein (246 aa).

An N-terminal signal peptide occupies residues 1–15; the sequence is MLVVFVATWSDLGLC. The segment at 16–223 is interaction with GRB2, ERI3 and SYN1; the sequence is KKRPKPGGWN…ESQAYYQRGS (208 aa). The segment at 18–100 is disordered; it reads RPKPGGWNTG…QWHKPSKPKT (83 aa). A run of 5 repeats spans residues 44 to 52, 53 to 60, 61 to 68, 69 to 76, and 77 to 84. Residues 44-84 form a 5 X 8 AA tandem repeats of P-H-G-G-G-W-G-Q region; it reads PQGGGGWGQPHGGGWGQPHGGGWGQPHGGGWGQPHGGGWGQ. Over residues 45-88 the composition is skewed to gly residues; the sequence is QGGGGWGQPHGGGWGQPHGGGWGQPHGGGWGQPHGGGWGQGGGT. 12 residues coordinate Cu(2+): histidine 54, glycine 55, glycine 56, histidine 62, glycine 63, glycine 64, histidine 70, glycine 71, glycine 72, histidine 78, glycine 79, and glycine 80. A compositionally biased stretch (basic residues) spans 91-100; sequence QWHKPSKPKT. A disulfide bridge connects residues cysteine 172 and cysteine 207. N-linked (GlcNAc...) asparagine glycosylation is found at asparagine 174 and asparagine 190. A lipid anchor (GPI-anchor amidated serine) is attached at serine 223. Residues 224 to 246 constitute a propeptide, removed in mature form; it reads SMVLFSSPPVILLISFLIFLIVG.

It belongs to the prion family. As to quaternary structure, monomer and homodimer. Has a tendency to aggregate into amyloid fibrils containing a cross-beta spine, formed by a steric zipper of superposed beta-strands. Soluble oligomers may represent an intermediate stage on the path to fibril formation. Copper binding may promote oligomerization. Interacts with GRB2, APP, ERI3/PRNPIP and SYN1. Mislocalized cytosolically exposed PrP interacts with MGRN1; this interaction alters MGRN1 subcellular location and causes lysosomal enlargement. Interacts with KIAA1191.

The protein localises to the cell membrane. The protein resides in the golgi apparatus. Its primary physiological function is unclear. Has cytoprotective activity against internal or environmental stresses. May play a role in neuronal development and synaptic plasticity. May be required for neuronal myelin sheath maintenance. May play a role in iron uptake and iron homeostasis. Soluble oligomers are toxic to cultured neuroblastoma cells and induce apoptosis (in vitro). Association with GPC1 (via its heparan sulfate chains) targets PRNP to lipid rafts. Also provides Cu(2+) or Zn(2+) for the ascorbate-mediated GPC1 deaminase degradation of its heparan sulfate side chains. The chain is Major prion protein (PRNP) from Erythrocebus patas (Red guenon).